Reading from the N-terminus, the 293-residue chain is Dioxygenase cdmA (293 aa).

His-135, Asp-137, and His-212 together coordinate Fe cation.

Belongs to the PhyH family. As to quaternary structure, homodimer. The cofactor is Fe cation.

The enzyme catalyses chrodrimanin C + 2-oxoglutarate + O2 = verruculide A + succinate + CO2 + H2O. The catalysed reaction is chrodrimanin H + 2-oxoglutarate + O2 = chrodrimanin E + succinate + CO2 + H2O. Its pathway is secondary metabolite biosynthesis; terpenoid biosynthesis. In terms of biological role, dioxygenase; part of the gene cluster that mediates the biosynthesis of chrodrimanin B, a meroterpenoid that acts as a potent blocker of insect GABA-gated chloride channels. The first step of the pathway is the biosynthesis of 6-hydroxymellein by the polyketide synthase cdmE. The prenyltransferase cdmH acts as a 6-hydroxymellein 5-farnesyltransferase and produces the hydrophobic metabolite verruculide C. The FAD-dependent monooxygenase cdmI further converts verruculide C into verruculide B. The terpene cyclase cdmG then produced the pentacyclic molecule 3-hydroxypentacecilide A, the backbone structure of chrodrimanin B, via folding the farnesyl moiety of the substrate into the chair-boat conformation. The short-chain dehydrogenase/reductase cdmF functions as the 3-OH dehydrogenase that oxidizes the C-3 hydroxyl group of 3-hydroxypentacecilide A and produces chrodrimanin C, the dehydrogenated product of 3-hydroxypentacecilide A. The cytochrome P450 monooxygenase cdmJ then accepts both 3-hydroxypentacecilide A and chrodrimanin C and functions as a C-7-beta-hydroxylase to produce respectively chrodrimanin H and chrodrimanin F. The dioxygenase cdmA accepts chrodrimanin H to afford chrodrimanin E, which is further transformed to chrodrimanin A by the dioxygenase cdmD. CdmA can also accept chrodrimanin C as substrate to convert it into verruculide A, which is further converted into chrodrimanin T by cdmD. The last step of the biosynthesis is proposed to be performed by the acetyltransferase cdmC which acetylates chrodrimanin A to yield chrodrimanin B. The pathway may also lead to the production of additional shunt products, including chrodrimanins T and U. This chain is Dioxygenase cdmA, found in Talaromyces verruculosus (Penicillium verruculosum).